A 274-amino-acid polypeptide reads, in one-letter code: Orotidine 5'-phosphate decarboxylase (274 aa).

Lys-95 acts as the Proton donor in catalysis.

It belongs to the OMP decarboxylase family. Type 2 subfamily.

The catalysed reaction is orotidine 5'-phosphate + H(+) = UMP + CO2. Its pathway is pyrimidine metabolism; UMP biosynthesis via de novo pathway; UMP from orotate: step 2/2. This Mycolicibacterium paratuberculosis (strain ATCC BAA-968 / K-10) (Mycobacterium paratuberculosis) protein is Orotidine 5'-phosphate decarboxylase.